Consider the following 135-residue polypeptide: Basic phospholipase A2 KBf-VA (135 aa).

Intrachain disulfides connect cysteine 28–cysteine 87, cysteine 42–cysteine 134, cysteine 44–cysteine 60, cysteine 59–cysteine 115, cysteine 66–cysteine 108, cysteine 76–cysteine 101, and cysteine 94–cysteine 106. Ca(2+)-binding residues include tyrosine 43, glycine 45, and glycine 47. The active site involves histidine 63. Aspartate 64 is a binding site for Ca(2+). Residue aspartate 109 is part of the active site.

It belongs to the phospholipase A2 family. Group I subfamily. D49 sub-subfamily. It depends on Ca(2+) as a cofactor. As to expression, expressed by the venom gland.

The protein localises to the secreted. The enzyme catalyses a 1,2-diacyl-sn-glycero-3-phosphocholine + H2O = a 1-acyl-sn-glycero-3-phosphocholine + a fatty acid + H(+). Snake venom phospholipase A2 (PLA2) that inhibits neuromuscular transmission by blocking acetylcholine release from the nerve termini. PLA2 catalyzes the calcium-dependent hydrolysis of the 2-acyl groups in 3-sn-phosphoglycerides. The chain is Basic phospholipase A2 KBf-VA from Bungarus fasciatus (Banded krait).